The chain runs to 513 residues: MGVMDLPGGRRTYAQEMEFLERVTPTQWRVREGFVPNMRVPGVFYVNKHLETLMFDELRQHVDRGDVGGFLPAVKQLANVACLPGIVSKSIALPDVHSGYGFAIGNVAAFDMSDPNAVVSPGGVGFDINCGVRVVRTNLHERDVTDIKEKLAQSLFDHIPVGVGSQGIIPTSPAGLEAALEMGMDWSLREGYAWAEDKEHCEEYGRMLNADPNKVSARAKKRGLPQMGTLGAGNHYAEIQVVDEIFDKHAADKMGIERLGQVMVMIHSGSRGLGHQVATDALTEMERAMARDGILVNDRQLACAKISSPEGQNYLSAMSCAANYAWVNRSSMTFLCRQAFAKMFDQTPDDLDMHVVYDVSHNIAKIEEHVVDGELKTLLVHRKGSTRAFPPHHPLIPVDYQYTGQPVLIGGTMGTCSYILTGTEKGMEETFGSTCHGAGRARSRNNSRNKLDYTEVLEKLKTKGIAIRVASPKLVMEEAPESYKDVTEVVNTCHDAGISKKAVKLRPIAVVKG.

Residues aspartate 127, cysteine 130, histidine 235, histidine 267, and histidine 361 each contribute to the Mn(2+) site. 234–238 (NHYAE) serves as a coordination point for GMP. GMP-binding positions include 361 to 362 (HN), 410 to 413 (GGTM), serine 417, 436 to 439 (HGAG), and lysine 512. Histidine 436 acts as the GMP-histidine intermediate in catalysis.

This sequence belongs to the RtcB family. In terms of assembly, catalytic component of the tRNA-splicing ligase complex. Mn(2+) serves as cofactor.

The catalysed reaction is a 3'-end 3'-phospho-ribonucleotide-RNA + a 5'-end dephospho-ribonucleoside-RNA + GTP = a ribonucleotidyl-ribonucleotide-RNA + GMP + diphosphate. The enzyme catalyses a 3'-end 2',3'-cyclophospho-ribonucleotide-RNA + a 5'-end dephospho-ribonucleoside-RNA + GTP + H2O = a ribonucleotidyl-ribonucleotide-RNA + GMP + diphosphate + H(+). Catalytic subunit of the tRNA-splicing ligase complex that acts by directly joining spliced tRNA halves to mature-sized tRNAs by incorporating the precursor-derived splice junction phosphate into the mature tRNA as a canonical 3',5'-phosphodiester. May act as an RNA ligase with broad substrate specificity, and may function toward other RNAs. This is RNA-splicing ligase RtcB homolog from Micromonas commoda (strain RCC299 / NOUM17 / CCMP2709) (Picoplanktonic green alga).